Here is a 178-residue protein sequence, read N- to C-terminus: Large ribosomal subunit protein uL6 (178 aa).

Belongs to the universal ribosomal protein uL6 family. Part of the 50S ribosomal subunit.

In terms of biological role, this protein binds to the 23S rRNA, and is important in its secondary structure. It is located near the subunit interface in the base of the L7/L12 stalk, and near the tRNA binding site of the peptidyltransferase center. The sequence is that of Large ribosomal subunit protein uL6 from Lactococcus lactis subsp. cremoris (strain MG1363).